A 446-amino-acid polypeptide reads, in one-letter code: Exodeoxyribonuclease 7 large subunit (446 aa).

This sequence belongs to the XseA family. Heterooligomer composed of large and small subunits.

It is found in the cytoplasm. It carries out the reaction Exonucleolytic cleavage in either 5'- to 3'- or 3'- to 5'-direction to yield nucleoside 5'-phosphates.. In terms of biological role, bidirectionally degrades single-stranded DNA into large acid-insoluble oligonucleotides, which are then degraded further into small acid-soluble oligonucleotides. The chain is Exodeoxyribonuclease 7 large subunit from Shewanella denitrificans (strain OS217 / ATCC BAA-1090 / DSM 15013).